A 607-amino-acid polypeptide reads, in one-letter code: SNW/SKI-interacting protein A (607 aa).

Disordered stretches follow at residues 29–77 (ERYG…GGAF), 178–205 (AQPK…AAFN), 217–265 (EMAQ…IPPC), 327–434 (LQLK…DRDR), and 516–607 (KVMK…ERGR). Low complexity predominate over residues 35 to 49 (SAQSDAAAAAAKPSG). An SNW region spans residues 190-353 (SKFIKYKPSQ…QKARMERTGA (164 aa)). Residues 240 to 251 (PPVPVMHSPPRP) are compositionally biased toward pro residues. Coiled coils occupy residues 313–349 (AREA…ARME) and 391–418 (EREA…LEAR). Composition is skewed to basic and acidic residues over residues 327 to 339 (LQLK…EQEL), 379 to 434 (EQPR…DRDR), 516 to 527 (KVMKTDRFKPDK), 535 to 550 (RSGK…KQEE), and 562 to 571 (EVKKGKKAVE).

The protein belongs to the SNW family. Interacts with FLO6/SIP4. Interacts with DIS1. Widely expressed.

It is found in the nucleus. Its function is as follows. Acts as a positive regulator of drought and salt tolerance. Acts as a positive regulator of cell viability. The polypeptide is SNW/SKI-interacting protein A (Oryza sativa subsp. japonica (Rice)).